The chain runs to 110 residues: Parvalbumin alpha (110 aa).

Ser-2 is modified (N-acetylserine). 3 positions are modified to phosphoserine: Ser-2, Ser-8, and Ser-24. EF-hand domains lie at 39-74 and 78-110; these read KSAD…FSSD and LSAK…VAES. Ca(2+)-binding residues include Asp-52, Asp-54, Ser-56, Phe-58, Glu-60, and Glu-63. Position 66 is a phosphoserine (Ser-66). Positions 91, 93, 95, 97, and 102 each coordinate Ca(2+).

In muscle, parvalbumin is thought to be involved in relaxation after contraction. It binds two calcium ions. The chain is Parvalbumin alpha (Pvalb) from Rattus norvegicus (Rat).